The sequence spans 291 residues: RPE-retinal G protein-coupled receptor (291 aa).

At 1–15 (MAATRALPAGLGELE) the chain is on the extracellular side. The chain crosses the membrane as a helical span at residues 16 to 36 (VLAVGTVLLMEALSGISLNGL). At 37 to 52 (TIFSFCKTPDLRTPSN) the chain is on the cytoplasmic side. Residues 53–73 (LLVLSLALADTGISLNALVAA) traverse the membrane as a helical segment. Topologically, residues 74–91 (VSSLLRRWPHGSEGCQVH) are extracellular. Cys-88 and Cys-162 are oxidised to a cystine. A helical membrane pass occupies residues 92–112 (GFQGFATALASICGSAAVAWG). The Cytoplasmic portion of the chain corresponds to 113–130 (RYHHYCTRRQLAWDTAIP). Residues 131–151 (LVLFVWMSSAFWASLPLMGWG) traverse the membrane as a helical segment. Residues 152 to 175 (HYDYEPVGTCCTLDYSRGDRNFIS) lie on the Extracellular side of the membrane. A helical transmembrane segment spans residues 176–196 (FLFTMAFFNFLVPLFITHTSY). The Cytoplasmic portion of the chain corresponds to 197 to 219 (RFMEQKFSRSGHLPVNTTLPGRM). A helical transmembrane segment spans residues 220–240 (LLLGWGPYALLYLYAAIADVS). The Extracellular segment spans residues 241–247 (FISPKLQ). Residues 248–268 (MVPALIAKTMPTINAINYALH) form a helical membrane-spanning segment. Residue Lys-255 is modified to N6-(retinylidene)lysine. The Cytoplasmic portion of the chain corresponds to 269–291 (REMVCRGTWQCLSPQKSKKDRTQ).

It belongs to the G-protein coupled receptor 1 family. Opsin subfamily. Post-translationally, covalently binds all-trans- and 11-cis-retinal.

It is found in the membrane. Its function is as follows. Receptor for all-trans- and 11-cis-retinal. Binds preferentially to the former and may catalyze the isomerization of the chromophore by a retinochrome-like mechanism. The chain is RPE-retinal G protein-coupled receptor (Rgr) from Mus musculus (Mouse).